Here is a 540-residue protein sequence, read N- to C-terminus: Eukaryotic translation initiation factor 3 subunit L (540 aa).

The 209-residue stretch at threonine 307–histidine 515 folds into the PCI domain.

Belongs to the eIF-3 subunit L family. As to quaternary structure, component of the eukaryotic translation initiation factor 3 (eIF-3) complex. The eIF-3 complex interacts with pix.

The protein resides in the cytoplasm. Functionally, component of the eukaryotic translation initiation factor 3 (eIF-3) complex, which is involved in protein synthesis of a specialized repertoire of mRNAs and, together with other initiation factors, stimulates binding of mRNA and methionyl-tRNAi to the 40S ribosome. The eIF-3 complex specifically targets and initiates translation of a subset of mRNAs involved in cell proliferation. The sequence is that of Eukaryotic translation initiation factor 3 subunit L from Drosophila grimshawi (Hawaiian fruit fly).